A 416-amino-acid polypeptide reads, in one-letter code: Iron-regulated transcriptional activator AFT2 (416 aa).

D53 contributes to the Zn(2+) binding site. Residues R54, H55, K58, I74, E75, R76, S77, D78, and K81 each coordinate DNA. Position 55 (H55) interacts with Zn(2+). C86 is a binding site for Zn(2+). S88 serves as a coordination point for DNA. C109 contributes to the Zn(2+) binding site. Residues V119 and R120 each coordinate DNA. H133 and H135 together coordinate Zn(2+). 2 residues coordinate DNA: Q157 and N159. The CDC [2Fe-2S] cluster binding motif motif lies at 187 to 189 (CDC).

As to quaternary structure, homodimer. Dimerization decreases the DNA-binding activity.

The protein localises to the nucleus. With respect to regulation, dimerization via the binding of Fe(2+) or a [2Fe-2S] cluster decreases the DNA-binding activity. Transcription factor required for iron homeostasis and resistance to oxidative stress. With AFT1, activates the gene expression in response to low-iron conditions, also called iron regulon. Recognizes the consensus iron-responsive element (Fe-RE) sequence 5'-CACCC-3' in the promoters of target genes. The transcription activation by AFT1 and AFT2 depends on the mitochondrial iron-sulfur protein biosynthesis pathway. In high iron condition, the presence of iron leads to dimerization, which in turn leads to a decrease in DNA affinity. The protein is Iron-regulated transcriptional activator AFT2 of Saccharomyces cerevisiae (strain ATCC 204508 / S288c) (Baker's yeast).